A 137-amino-acid polypeptide reads, in one-letter code: Nucleoside diphosphate kinase (137 aa).

ATP contacts are provided by lysine 9, phenylalanine 57, arginine 85, threonine 91, arginine 102, and asparagine 112. Histidine 115 functions as the Pros-phosphohistidine intermediate in the catalytic mechanism.

It belongs to the NDK family. As to quaternary structure, homotetramer. Mg(2+) serves as cofactor.

Its subcellular location is the cytoplasm. The enzyme catalyses a 2'-deoxyribonucleoside 5'-diphosphate + ATP = a 2'-deoxyribonucleoside 5'-triphosphate + ADP. The catalysed reaction is a ribonucleoside 5'-diphosphate + ATP = a ribonucleoside 5'-triphosphate + ADP. Its function is as follows. Major role in the synthesis of nucleoside triphosphates other than ATP. The ATP gamma phosphate is transferred to the NDP beta phosphate via a ping-pong mechanism, using a phosphorylated active-site intermediate. The sequence is that of Nucleoside diphosphate kinase from Geobacter sulfurreducens (strain ATCC 51573 / DSM 12127 / PCA).